A 626-amino-acid polypeptide reads, in one-letter code: Endoglucanase 19 (626 aa).

Positions 1–23 (MGSRTTISILVVLLLGLVQLAIS) are cleaved as a signal peptide. The active-site Nucleophile is the Asp79. Residues His412, Asp464, and Glu473 contribute to the active site. Residues 515–536 (APVPQRKPTKPPAASSPSPITI) are disordered. Positions 526 to 536 (PAASSPSPITI) are enriched in low complexity. Asn560 and Asn622 each carry an N-linked (GlcNAc...) asparagine glycan.

The protein belongs to the glycosyl hydrolase 9 (cellulase E) family.

It is found in the secreted. The catalysed reaction is Endohydrolysis of (1-&gt;4)-beta-D-glucosidic linkages in cellulose, lichenin and cereal beta-D-glucans.. In Arabidopsis thaliana (Mouse-ear cress), this protein is Endoglucanase 19.